Here is a 150-residue protein sequence, read N- to C-terminus: D-aminoacyl-tRNA deacylase (150 aa).

The Gly-cisPro motif, important for rejection of L-amino acids motif lies at 138-139 (GP).

The protein belongs to the DTD family. Homodimer.

It is found in the cytoplasm. It carries out the reaction glycyl-tRNA(Ala) + H2O = tRNA(Ala) + glycine + H(+). The enzyme catalyses a D-aminoacyl-tRNA + H2O = a tRNA + a D-alpha-amino acid + H(+). Its function is as follows. An aminoacyl-tRNA editing enzyme that deacylates mischarged D-aminoacyl-tRNAs. Also deacylates mischarged glycyl-tRNA(Ala), protecting cells against glycine mischarging by AlaRS. Acts via tRNA-based rather than protein-based catalysis; rejects L-amino acids rather than detecting D-amino acids in the active site. By recycling D-aminoacyl-tRNA to D-amino acids and free tRNA molecules, this enzyme counteracts the toxicity associated with the formation of D-aminoacyl-tRNA entities in vivo and helps enforce protein L-homochirality. The protein is D-aminoacyl-tRNA deacylase of Azobacteroides pseudotrichonymphae genomovar. CFP2.